A 388-amino-acid chain; its full sequence is S-adenosylmethionine synthase (388 aa).

H16 lines the ATP pocket. D18 contacts Mg(2+). A K(+)-binding site is contributed by E44. Residues E57 and Q100 each coordinate L-methionine. The tract at residues 100–110 is flexible loop; the sequence is QSADIAQGVNE. Residues 167–169, 233–234, D242, 248–249, A265, and K269 each bind ATP; these read DAK, RF, and RK. L-methionine is bound at residue D242. Residue K273 participates in L-methionine binding.

It belongs to the AdoMet synthase family. As to quaternary structure, homotetramer; dimer of dimers. It depends on Mg(2+) as a cofactor. Requires K(+) as cofactor.

It localises to the cytoplasm. The enzyme catalyses L-methionine + ATP + H2O = S-adenosyl-L-methionine + phosphate + diphosphate. Its pathway is amino-acid biosynthesis; S-adenosyl-L-methionine biosynthesis; S-adenosyl-L-methionine from L-methionine: step 1/1. Functionally, catalyzes the formation of S-adenosylmethionine (AdoMet) from methionine and ATP. The overall synthetic reaction is composed of two sequential steps, AdoMet formation and the subsequent tripolyphosphate hydrolysis which occurs prior to release of AdoMet from the enzyme. The sequence is that of S-adenosylmethionine synthase from Aromatoleum aromaticum (strain DSM 19018 / LMG 30748 / EbN1) (Azoarcus sp. (strain EbN1)).